Here is a 613-residue protein sequence, read N- to C-terminus: tRNA 5-methylaminomethyl-2-thiouridine biosynthesis bifunctional protein MnmC (613 aa).

The segment at 1–225 (MKKAKLIFKD…KREMIKAYLE (225 aa)) is tRNA (mnm(5)s(2)U34)-methyltransferase. Residues 252–613 (IGAGISSAVL…FLIRKLKKGL (362 aa)) are FAD-dependent cmnm(5)s(2)U34 oxidoreductase.

It in the N-terminal section; belongs to the methyltransferase superfamily. tRNA (mnm(5)s(2)U34)-methyltransferase family. The protein in the C-terminal section; belongs to the DAO family. FAD is required as a cofactor.

The protein localises to the cytoplasm. It carries out the reaction 5-aminomethyl-2-thiouridine(34) in tRNA + S-adenosyl-L-methionine = 5-methylaminomethyl-2-thiouridine(34) in tRNA + S-adenosyl-L-homocysteine + H(+). Its function is as follows. Catalyzes the last two steps in the biosynthesis of 5-methylaminomethyl-2-thiouridine (mnm(5)s(2)U) at the wobble position (U34) in tRNA. Catalyzes the FAD-dependent demodification of cmnm(5)s(2)U34 to nm(5)s(2)U34, followed by the transfer of a methyl group from S-adenosyl-L-methionine to nm(5)s(2)U34, to form mnm(5)s(2)U34. In Campylobacter jejuni (strain RM1221), this protein is tRNA 5-methylaminomethyl-2-thiouridine biosynthesis bifunctional protein MnmC.